The following is a 317-amino-acid chain: Lactamase-like protein adaB (317 aa).

Zn(2+) is bound by residues H97, H99, D101, and H102. D101 functions as the Proton donor/acceptor in the catalytic mechanism.

It belongs to the metallo-beta-lactamase superfamily. It depends on Zn(2+) as a cofactor.

It carries out the reaction 3-(2,4-dioxopentyl)-2,3,6,8,9-pentahydroxy-1-oxo-1,2,3,4-tetrahydroanthracene-2-carboxyl-[ACP] = 2-acetyl-3,4a,8,10,11,12a-hexahydroxy-1,4,4a,5,12,12a-hexahydrotetracene-1,12-dione + holo-[ACP] + H(+). Its pathway is secondary metabolite biosynthesis. Its function is as follows. Lactamase-like protein; part of the gene cluster that mediates the biosynthesis of the linear tetracyclic TAN-1612 neuropeptide Y receptor antagonist. The decaketide backbone of TAN-1612 is synthesized by the non-reducing polyketide synthase adaA via condensation of one acetyl-CoA starter unit with 9 malonyl-CoA units. The FAD-dependent monooxygenase adaC then performs hydroxylation at C2 while the polaketide chain is still attached to the NRPKS adaA. The alpha-hydroxylation step at C2 appears to be crucial for the following C18-C1 Claisen cyclization and release of the C9-hydroxyl version of TAN-1612 from the NRPKS adaA, two steps performed by the lactamase-like protein adaB. Finally, the O-methyltransferase adaD performs the C9 O-methylation to complete the biosynthesis of TAN-1612. This chain is Lactamase-like protein adaB, found in Aspergillus niger (strain ATCC MYA-4892 / CBS 513.88 / FGSC A1513).